A 348-amino-acid chain; its full sequence is MAMIPSISKLLFVAICLFVHMSVSFGDFSIVGYSQDDLTSTERLIQLFNSWMLNHNKFYENVDEKLYRFEIFKDNLNYIDETNKKNNSYWLGLNEFADLSNDEFNEKYVGSLIDATIEQSYDEEFINEDTVNLPENVDWRKKGAVTPVRHQGSCGSCWAFSAVATVEGINKIRTGKLVELSEQELVDCERRSHGCKGGYPPYALEYVAKNGIHLRSKYPYKAKQGTCRAKQVGGPIVKTSGVGRVQPNNEGNLLNAIAKQPVSVVVESKGRPFQLYKGGIFEGPCGTKVDHAVTAVGYGKSGGKGYILIKNSWGTAWGEKGYIRIKRAPGNSPGVCGLYKSSYYPTKN.

The signal sequence occupies residues 1–16 (MAMIPSISKLLFVAIC). A propeptide spans 17 to 132 (LFVHMSVSFG…EEFINEDTVN (116 aa)) (activation peptide). An N-linked (GlcNAc...) asparagine glycan is attached at asparagine 86. 3 disulfide bridges follow: cysteine 154/cysteine 195, cysteine 188/cysteine 227, and cysteine 285/cysteine 336. Cysteine 157 is a catalytic residue. Cysteine 157 contributes to the E64 binding site. Catalysis depends on residues histidine 291 and asparagine 311.

This sequence belongs to the peptidase C1 family. As to quaternary structure, monomer.

It carries out the reaction Hydrolysis of proteins with broad specificity for peptide bonds, similar to those of papain and chymopapain.. Repressed by the active-site-directed cysteine protease inhibitor E64 (L-trans-epoxysuccinyl-leucylamide-(4-guanido)-butane) produced by Aspergillus japonicus. Its function is as follows. Cysteine proteinase with a high level of diversity in substrate specificity. The protein is Caricain of Carica papaya (Papaya).